Reading from the N-terminus, the 179-residue chain is Riboflavin kinase (179 aa).

61-66 (GDGEGR) contacts CDP. Mg(2+) contacts are provided by threonine 90 and asparagine 92. Residues threonine 147 and glutamate 155 each coordinate FMN. 160–163 (VELR) contributes to the CDP binding site.

The protein belongs to the archaeal riboflavin kinase family. The cofactor is Mg(2+).

The catalysed reaction is riboflavin + CTP = CDP + FMN + H(+). It participates in cofactor biosynthesis; FMN biosynthesis; FMN from riboflavin (CTP route): step 1/1. Functionally, catalyzes the CTP-dependent phosphorylation of riboflavin (vitamin B2) to form flavin mononucleotide (FMN). The sequence is that of Riboflavin kinase from Ignicoccus hospitalis (strain KIN4/I / DSM 18386 / JCM 14125).